The primary structure comprises 157 residues: Small ribosomal subunit protein uS7 (157 aa).

The protein belongs to the universal ribosomal protein uS7 family. As to quaternary structure, part of the 30S ribosomal subunit. Contacts proteins S9 and S11.

One of the primary rRNA binding proteins, it binds directly to 16S rRNA where it nucleates assembly of the head domain of the 30S subunit. Is located at the subunit interface close to the decoding center, probably blocks exit of the E-site tRNA. This Phenylobacterium zucineum (strain HLK1) protein is Small ribosomal subunit protein uS7.